We begin with the raw amino-acid sequence, 407 residues long: Peptidase T (407 aa).

His82 is a Zn(2+) binding site. Asp84 is a catalytic residue. Asp143 is a binding site for Zn(2+). Glu177 functions as the Proton acceptor in the catalytic mechanism. Residues Glu178, Asp200, and His382 each coordinate Zn(2+).

It belongs to the peptidase M20B family. It depends on Zn(2+) as a cofactor.

The protein resides in the cytoplasm. The enzyme catalyses Release of the N-terminal residue from a tripeptide.. In terms of biological role, cleaves the N-terminal amino acid of tripeptides. This Streptococcus pyogenes serotype M28 (strain MGAS6180) protein is Peptidase T.